The chain runs to 338 residues: MTVYYDKDCNINLIKSKKVAMIGFGSQGHAHAENLRDSGVEVVVGLRKDGSSWAKAEAKGFKVMTVGDASAYADLIMILLPDENQAEIYKDEIEPNLKNGATIAFGHGFNIHYGRIHPRADINVTMIAPKAPGHTVRSEFVRGGGIPDLIAVGQNPSGNTRELALSYASAIGGGRTAIIETTFKDETETDLFGEQAVLCGGAVSLVQAGFETLTEAGYAPELAYFECLHELKLIVDLMFQGGIADMRYSISNTAEYGDYVSGKRVINAESKAAMREILKEIQDGRFAKDFILEGQSGYPRMNAERANAKASLIEQTGVKLRTMMPWIAANKIVDTSKN.

Residues 1-181 enclose the KARI N-terminal Rossmann domain; sequence MTVYYDKDCN…GGGRTAIIET (181 aa). NADP(+) is bound by residues 24 to 27, Arg-47, Ser-52, and 82 to 85; these read FGSQ and DENQ. Residue His-107 is part of the active site. An NADP(+)-binding site is contributed by Gly-133. A KARI C-terminal knotted domain is found at 182–327; the sequence is TFKDETETDL…VKLRTMMPWI (146 aa). Positions 190, 194, 226, and 230 each coordinate Mg(2+). Ser-251 provides a ligand contact to substrate.

The protein belongs to the ketol-acid reductoisomerase family. Mg(2+) is required as a cofactor.

The enzyme catalyses (2R)-2,3-dihydroxy-3-methylbutanoate + NADP(+) = (2S)-2-acetolactate + NADPH + H(+). It carries out the reaction (2R,3R)-2,3-dihydroxy-3-methylpentanoate + NADP(+) = (S)-2-ethyl-2-hydroxy-3-oxobutanoate + NADPH + H(+). The protein operates within amino-acid biosynthesis; L-isoleucine biosynthesis; L-isoleucine from 2-oxobutanoate: step 2/4. Its pathway is amino-acid biosynthesis; L-valine biosynthesis; L-valine from pyruvate: step 2/4. Its function is as follows. Involved in the biosynthesis of branched-chain amino acids (BCAA). Catalyzes an alkyl-migration followed by a ketol-acid reduction of (S)-2-acetolactate (S2AL) to yield (R)-2,3-dihydroxy-isovalerate. In the isomerase reaction, S2AL is rearranged via a Mg-dependent methyl migration to produce 3-hydroxy-3-methyl-2-ketobutyrate (HMKB). In the reductase reaction, this 2-ketoacid undergoes a metal-dependent reduction by NADPH to yield (R)-2,3-dihydroxy-isovalerate. The sequence is that of Ketol-acid reductoisomerase (NADP(+)) from Sulfurimonas denitrificans (strain ATCC 33889 / DSM 1251) (Thiomicrospira denitrificans (strain ATCC 33889 / DSM 1251)).